A 186-amino-acid polypeptide reads, in one-letter code: dCTP deaminase (186 aa).

DCTP is bound at residue 107-112 (KSTYAR). The active-site Proton donor/acceptor is the E133. Positions 152, 166, and 176 each coordinate dCTP.

The protein belongs to the dCTP deaminase family. As to quaternary structure, homotrimer.

The enzyme catalyses dCTP + H2O + H(+) = dUTP + NH4(+). It functions in the pathway pyrimidine metabolism; dUMP biosynthesis; dUMP from dCTP (dUTP route): step 1/2. Functionally, catalyzes the deamination of dCTP to dUTP. In Campylobacter lari (strain RM2100 / D67 / ATCC BAA-1060), this protein is dCTP deaminase.